The following is a 234-amino-acid chain: Opacity protein opA56 (234 aa).

A signal peptide is located at residue Ala1.

It belongs to the opacity porin family.

The protein resides in the cell outer membrane. Its function is as follows. Implicated in a number of adherence functions. OPA proteins are implicated in pathogenesis and are subject to phase variation. The chain is Opacity protein opA56 (opaF) from Neisseria gonorrhoeae.